Consider the following 605-residue polypeptide: DNA primase (605 aa).

The segment at C37–C61 adopts a CHC2-type zinc-finger fold. The Toprim domain maps to K248–G329. 3 residues coordinate Mg(2+): E254, D298, and D300.

This sequence belongs to the DnaG primase family. Monomer. Interacts with DnaB. The cofactor is Zn(2+). Mg(2+) is required as a cofactor.

The catalysed reaction is ssDNA + n NTP = ssDNA/pppN(pN)n-1 hybrid + (n-1) diphosphate.. Its function is as follows. RNA polymerase that catalyzes the synthesis of short RNA molecules used as primers for DNA polymerase during DNA replication. This chain is DNA primase, found in Campylobacter jejuni subsp. jejuni serotype O:2 (strain ATCC 700819 / NCTC 11168).